The primary structure comprises 977 residues: Bifunctional glutamine synthetase adenylyltransferase/adenylyl-removing enzyme (977 aa).

The tract at residues 1–457 is adenylyl removase; it reads MRLPLPSDLP…HFRQVIADPD (457 aa). The tract at residues 468–977 is adenylyl transferase; sequence GGEWSPLWEQ…RRIWGELGLS (510 aa).

The protein belongs to the GlnE family. Mg(2+) serves as cofactor.

It catalyses the reaction [glutamine synthetase]-O(4)-(5'-adenylyl)-L-tyrosine + phosphate = [glutamine synthetase]-L-tyrosine + ADP. The catalysed reaction is [glutamine synthetase]-L-tyrosine + ATP = [glutamine synthetase]-O(4)-(5'-adenylyl)-L-tyrosine + diphosphate. Involved in the regulation of glutamine synthetase GlnA, a key enzyme in the process to assimilate ammonia. When cellular nitrogen levels are high, the C-terminal adenylyl transferase (AT) inactivates GlnA by covalent transfer of an adenylyl group from ATP to specific tyrosine residue of GlnA, thus reducing its activity. Conversely, when nitrogen levels are low, the N-terminal adenylyl removase (AR) activates GlnA by removing the adenylyl group by phosphorolysis, increasing its activity. The regulatory region of GlnE binds the signal transduction protein PII (GlnB) which indicates the nitrogen status of the cell. This Pseudomonas putida (strain ATCC 47054 / DSM 6125 / CFBP 8728 / NCIMB 11950 / KT2440) protein is Bifunctional glutamine synthetase adenylyltransferase/adenylyl-removing enzyme.